The sequence spans 115 residues: Protein V2 (115 aa).

Belongs to the geminiviridae protein AV2/V2 family. Interacts with host SGS3.

Its subcellular location is the host cytoplasm. The protein localises to the host perinuclear region. Its function is as follows. Through its interaction with host SGS3, acts as a suppressor of RNA-mediated gene silencing, also known as post-transcriptional gene silencing (PTGS), a mechanism of plant viral defense that limits the accumulation of viral RNAs. The protein is Protein V2 of Cynanchum acutum (Little mallow).